The following is a 275-amino-acid chain: MKGQILREMKVLKAIEPEFEIARRVAFIKAKLIEAHSKTLVLGISGGVDSSLAGRLCQLAVNSLNQEKSTDSYQFIAVRLPYHVQKDEHEAQLACQFIQPSKLVTVNIHDGVVGVHNATLAGLDAAGLTHDSTKADFIKGNVKARMRMIAQYDIAGLVGGLVVGTDHSAENITGFYTKWGDGACDLAPLFGLNKRQVRQLAAFLGAPQVLVVKAPTADLEENKPQLEDEVALGLSYDAIDDFLEGKPVSQAVEDKLVAIYLRTQHKRQPIATIYD.

ATP is bound at residue 43-50 (GISGGVDS). A Mg(2+)-binding site is contributed by D49. Position 145 (R145) interacts with deamido-NAD(+). ATP is bound at residue T165. Residue E170 coordinates Mg(2+). Deamido-NAD(+)-binding residues include K178 and D185. Residues K194 and T216 each coordinate ATP. 265–266 (HK) is a deamido-NAD(+) binding site.

The protein belongs to the NAD synthetase family. In terms of assembly, homodimer.

The enzyme catalyses deamido-NAD(+) + NH4(+) + ATP = AMP + diphosphate + NAD(+) + H(+). Its pathway is cofactor biosynthesis; NAD(+) biosynthesis; NAD(+) from deamido-NAD(+) (ammonia route): step 1/1. In terms of biological role, catalyzes the ATP-dependent amidation of deamido-NAD to form NAD. Uses ammonia as a nitrogen source. This is NH(3)-dependent NAD(+) synthetase from Shewanella denitrificans (strain OS217 / ATCC BAA-1090 / DSM 15013).